Consider the following 240-residue polypeptide: PF03932 family protein CutC (240 aa).

Belongs to the CutC family.

Its subcellular location is the cytoplasm. This chain is PF03932 family protein CutC, found in Xanthomonas axonopodis pv. citri (strain 306).